A 305-amino-acid chain; its full sequence is Mas-related G-protein coupled receptor member A7 (305 aa).

Residues 1–17 (MDETSPRSIDIESLIPN) lie on the Extracellular side of the membrane. The helical transmembrane segment at 18-38 (LMIIIFGLVGLTGNAIVLWLL) threads the bilayer. The Cytoplasmic portion of the chain corresponds to 39–46 (GFCLHRNA). Residues 47–67 (FLVYILNLALADFLFLLCHFI) form a helical membrane-spanning segment. At 68–81 (NSAMFLLKVPIPNG) the chain is on the extracellular side. Residues 82 to 102 (IFVYCFYTIKMVLYITGLSML) form a helical membrane-spanning segment. The Cytoplasmic segment spans residues 103–129 (SAISTERCLSVLCPIWYHCRRPEHTST). The helical transmembrane segment at 130–150 (VMCAVIWIFSVLICILKEYFC) threads the bilayer. The Extracellular segment spans residues 151–167 (DFFGTKLGNYYVCQASN). A helical membrane pass occupies residues 168–188 (FFMGAYLMFLFVVLCLSTLAL). Over 189–211 (LARLFCGAEKMKFTRLFVTIMLT) the chain is Cytoplasmic. The helical transmembrane segment at 212 to 232 (ILVFLLCGLPWGFFWFLLIWI) threads the bilayer. At 233–244 (KGGFSVLDYRLY) the chain is on the extracellular side. Residues 245-265 (LASIVLTVVNSCANPIIYFFV) traverse the membrane as a helical segment. Residues 266-305 (GSFRHRLKHQTLKMVLQSALQDTPETHENMVEMSRIKAEQ) are Cytoplasmic-facing.

The protein belongs to the G-protein coupled receptor 1 family. Mas subfamily. In terms of tissue distribution, expressed in a subset of sensory neurons that includes nociceptors. Expressed in the subclass of non-peptidergic sensory neurons that are IB4(+) and VR1(-).

The protein localises to the cell membrane. Functionally, orphan receptor. May be a receptor for RFamide-family neuropeptides such as NPFF and NPAF, which are analgesic in vivo. May regulate nociceptor function and/or development, including the sensation or modulation of pain. This chain is Mas-related G-protein coupled receptor member A7 (Mrgpra7), found in Mus musculus (Mouse).